Consider the following 389-residue polypeptide: Geranylgeranyl pyrophosphate synthase A (389 aa).

Positions 99, 102, and 131 each coordinate isopentenyl diphosphate. Residues Asp138 and Asp142 each contribute to the Mg(2+) site. Arg147 serves as a coordination point for dimethylallyl diphosphate. Arg148 is an isopentenyl diphosphate binding site.

Belongs to the FPP/GGPP synthase family. Requires Mg(2+) as cofactor.

Its subcellular location is the cytoplasm. The enzyme catalyses isopentenyl diphosphate + (2E)-geranyl diphosphate = (2E,6E)-farnesyl diphosphate + diphosphate. It carries out the reaction isopentenyl diphosphate + (2E,6E)-farnesyl diphosphate = (2E,6E,10E)-geranylgeranyl diphosphate + diphosphate. It participates in isoprenoid biosynthesis; farnesyl diphosphate biosynthesis; farnesyl diphosphate from geranyl diphosphate and isopentenyl diphosphate: step 1/1. Its pathway is isoprenoid biosynthesis; geranylgeranyl diphosphate biosynthesis; geranylgeranyl diphosphate from farnesyl diphosphate and isopentenyl diphosphate: step 1/1. Catalyzes the trans-addition of the 2 molecules of isopentenyl diphosphate (IPP) onto geranyl diphosphate (GDP) to form geranylgeranyl pyrophosphate (GGDP). Does not catalyze the conversion of dimethylallyl diphosphate (DMAPP). The protein is Geranylgeranyl pyrophosphate synthase A (GGS-A) of Phomopsis amygdali (Fusicoccum amygdali).